Here is a 222-residue protein sequence, read N- to C-terminus: Protein SHI RELATED SEQUENCE 4 (222 aa).

Zn(2+) is bound by residues C72, C75, C83, C88, C92, and C99. A DNA-binding region (zn(2)-C6 fungal-type; degenerate) is located at residues 72–99 (CQECGNQAKKGCTHGRCRTCCKSNGLHC). A disordered region spans residues 114 to 137 (RERQQQLQTPTSNPTGGSGRVGKY). Positions 118–128 (QQLQTPTSNPT) are enriched in polar residues. Positions 191–194 (IAGH) match the Required for homo- and heterodimerization motif.

It belongs to the SHI protein family. In terms of tissue distribution, expressed in cotyledon tips, leaf primordia, hydathodes, stipules, and lateral root primordia and weakly at the edges of petals and sepals.

The protein resides in the nucleus. Functionally, transcription activator that binds DNA on 5'-ACTCTAC-3' and promotes auxin homeostasis-regulating gene expression (e.g. YUC genes), as well as genes affecting stamen development, cell expansion and timing of flowering. Synergistically with other SHI-related proteins, regulates gynoecium, stamen and leaf development in a dose-dependent manner, controlling apical-basal patterning. Promotes style and stigma formation, and influences vascular development during gynoecium development. May also have a role in the formation and/or maintenance of the shoot apical meristem (SAM). The sequence is that of Protein SHI RELATED SEQUENCE 4 (SRS4) from Arabidopsis thaliana (Mouse-ear cress).